Here is a 218-residue protein sequence, read N- to C-terminus: Large ribosomal subunit protein uL3 (218 aa).

Belongs to the universal ribosomal protein uL3 family. In terms of assembly, part of the 50S ribosomal subunit. Forms a cluster with proteins L14 and L19.

In terms of biological role, one of the primary rRNA binding proteins, it binds directly near the 3'-end of the 23S rRNA, where it nucleates assembly of the 50S subunit. This is Large ribosomal subunit protein uL3 from Corynebacterium urealyticum (strain ATCC 43042 / DSM 7109).